The primary structure comprises 174 residues: ATP synthase subunit delta, sodium ion specific (174 aa).

This sequence belongs to the ATPase delta chain family. As to quaternary structure, F-type ATPases have 2 components, F(1) - the catalytic core - and F(0) - the membrane proton channel. F(1) has five subunits: alpha(3), beta(3), gamma(1), delta(1), epsilon(1). F(0) has three main subunits: a(1), b(2) and c(10-14). The alpha and beta chains form an alternating ring which encloses part of the gamma chain. F(1) is attached to F(0) by a central stalk formed by the gamma and epsilon chains, while a peripheral stalk is formed by the delta and b chains.

It localises to the cell inner membrane. F(1)F(0) ATP synthase produces ATP from ADP in the presence of a proton or sodium gradient. F-type ATPases consist of two structural domains, F(1) containing the extramembraneous catalytic core and F(0) containing the membrane proton channel, linked together by a central stalk and a peripheral stalk. During catalysis, ATP synthesis in the catalytic domain of F(1) is coupled via a rotary mechanism of the central stalk subunits to proton translocation. Its function is as follows. This protein is part of the stalk that links CF(0) to CF(1). It either transmits conformational changes from CF(0) to CF(1) or is implicated in proton conduction. In Propionigenium modestum, this protein is ATP synthase subunit delta, sodium ion specific.